The chain runs to 211 residues: Uracil phosphoribosyltransferase (211 aa).

5-phospho-alpha-D-ribose 1-diphosphate is bound by residues Arg-78, Arg-103, and 130-138 (DPMLATGNS). Residues Ile-193 and 198 to 200 (GDA) each bind uracil. Asp-199 is a 5-phospho-alpha-D-ribose 1-diphosphate binding site.

It belongs to the UPRTase family. It depends on Mg(2+) as a cofactor.

The catalysed reaction is UMP + diphosphate = 5-phospho-alpha-D-ribose 1-diphosphate + uracil. It functions in the pathway pyrimidine metabolism; UMP biosynthesis via salvage pathway; UMP from uracil: step 1/1. Its activity is regulated as follows. Allosterically activated by GTP. Catalyzes the conversion of uracil and 5-phospho-alpha-D-ribose 1-diphosphate (PRPP) to UMP and diphosphate. The chain is Uracil phosphoribosyltransferase from Acinetobacter baumannii (strain ATCC 17978 / DSM 105126 / CIP 53.77 / LMG 1025 / NCDC KC755 / 5377).